A 221-amino-acid polypeptide reads, in one-letter code: Deoxyribose-phosphate aldolase (221 aa).

Catalysis depends on D91, which acts as the Proton donor/acceptor. K153 serves as the catalytic Schiff-base intermediate with acetaldehyde. Residue K182 is the Proton donor/acceptor of the active site.

It belongs to the DeoC/FbaB aldolase family. DeoC type 1 subfamily.

Its subcellular location is the cytoplasm. The catalysed reaction is 2-deoxy-D-ribose 5-phosphate = D-glyceraldehyde 3-phosphate + acetaldehyde. It participates in carbohydrate degradation; 2-deoxy-D-ribose 1-phosphate degradation; D-glyceraldehyde 3-phosphate and acetaldehyde from 2-deoxy-alpha-D-ribose 1-phosphate: step 2/2. Its function is as follows. Catalyzes a reversible aldol reaction between acetaldehyde and D-glyceraldehyde 3-phosphate to generate 2-deoxy-D-ribose 5-phosphate. The polypeptide is Deoxyribose-phosphate aldolase (Clostridium botulinum (strain Eklund 17B / Type B)).